A 102-amino-acid polypeptide reads, in one-letter code: Aspartyl/glutamyl-tRNA(Asn/Gln) amidotransferase subunit C (102 aa).

It belongs to the GatC family. In terms of assembly, heterotrimer of A, B and C subunits.

It carries out the reaction L-glutamyl-tRNA(Gln) + L-glutamine + ATP + H2O = L-glutaminyl-tRNA(Gln) + L-glutamate + ADP + phosphate + H(+). The enzyme catalyses L-aspartyl-tRNA(Asn) + L-glutamine + ATP + H2O = L-asparaginyl-tRNA(Asn) + L-glutamate + ADP + phosphate + 2 H(+). In terms of biological role, allows the formation of correctly charged Asn-tRNA(Asn) or Gln-tRNA(Gln) through the transamidation of misacylated Asp-tRNA(Asn) or Glu-tRNA(Gln) in organisms which lack either or both of asparaginyl-tRNA or glutaminyl-tRNA synthetases. The reaction takes place in the presence of glutamine and ATP through an activated phospho-Asp-tRNA(Asn) or phospho-Glu-tRNA(Gln). The chain is Aspartyl/glutamyl-tRNA(Asn/Gln) amidotransferase subunit C from Leuconostoc citreum (strain KM20).